Consider the following 89-residue polypeptide: Small ribosomal subunit protein uS15 (89 aa).

Belongs to the universal ribosomal protein uS15 family. As to quaternary structure, part of the 30S ribosomal subunit. Forms a bridge to the 50S subunit in the 70S ribosome, contacting the 23S rRNA.

One of the primary rRNA binding proteins, it binds directly to 16S rRNA where it helps nucleate assembly of the platform of the 30S subunit by binding and bridging several RNA helices of the 16S rRNA. Its function is as follows. Forms an intersubunit bridge (bridge B4) with the 23S rRNA of the 50S subunit in the ribosome. This Streptococcus agalactiae serotype Ia (strain ATCC 27591 / A909 / CDC SS700) protein is Small ribosomal subunit protein uS15.